Reading from the N-terminus, the 235-residue chain is Meiotically up-regulated gene 123 protein (235 aa).

The span at 1-14 (MERLATRSSHDDPY) shows a compositional bias: basic and acidic residues. 3 disordered regions span residues 1–34 (MERL…SNGS), 58–83 (PLHS…GGMR), and 169–235 (SRAD…FDSD). Over residues 15-34 (SRSSLPTSNAINSNHESNGS) the composition is skewed to polar residues. Low complexity predominate over residues 61-77 (SSPSIKSSSQNGKSSSK). A compositionally biased stretch (polar residues) spans 176 to 202 (ETTQSDGFESRSGSPTHDIQSYLVNRR). Ser180, Ser187, and Ser189 each carry phosphoserine. Thr191 is subject to Phosphothreonine.

It is found in the cytoplasm. It localises to the nucleus. Functionally, involved in sporulation and has a role in meiosis. This chain is Meiotically up-regulated gene 123 protein (mug123), found in Schizosaccharomyces pombe (strain 972 / ATCC 24843) (Fission yeast).